Here is a 146-residue protein sequence, read N- to C-terminus: Snake venom vascular endothelial growth factor toxin (146 aa).

Positions 1–24 (MAVYLLAVAILFCIQGWPLGTVQG) are cleaved as a signal peptide. Pyrrolidone carboxylic acid is present on Q25. 3 cysteine pairs are disulfide-bonded: C38–C80, C69–C115, and C73–C117. The disordered stretch occupies residues 118-146 (RPRSASGVNSRKHKRNPEEGEPRAKFPFV). Residues 133–146 (NPEEGEPRAKFPFV) show a composition bias toward basic and acidic residues.

It belongs to the PDGF/VEGF growth factor family. Snake venom VEGF subfamily. Homodimer; disulfide-linked. Interacts with VEGF receptor-1 (FLT1) with a high affinity, whereas it binds to VEGF receptor-2 (KDR) with a low affinity. Does not bind VEGF receptor-3 (FLT4). As to expression, expressed by the venom gland.

It is found in the secreted. Functionally, snake venom VEGFs that may contribute to venom dispersion and prey subjugation by inducing vascular permeability and hypotension. This protein induces an increase in capillary permeability after intradermal injection, as well as a drastic hypotensive effect after intravenous injection. The hypotension is mediated by nitric oxide (NO), which is produced by VEGF-activated endothelium NO synthase. Also induces angiogenesis in vitro. Like other crotalid VEGFs, this protein interacts with VEGF receptor-1 (FLT1) with a high affinity, whereas it binds to VEGF receptor-2 (KDR) with a low affinity. This Bothrops jararaca (Jararaca) protein is Snake venom vascular endothelial growth factor toxin.